A 483-amino-acid polypeptide reads, in one-letter code: Proline--tRNA ligase (483 aa).

This sequence belongs to the class-II aminoacyl-tRNA synthetase family. ProS type 3 subfamily. In terms of assembly, homodimer.

It localises to the cytoplasm. The enzyme catalyses tRNA(Pro) + L-proline + ATP = L-prolyl-tRNA(Pro) + AMP + diphosphate. Catalyzes the attachment of proline to tRNA(Pro) in a two-step reaction: proline is first activated by ATP to form Pro-AMP and then transferred to the acceptor end of tRNA(Pro). The sequence is that of Proline--tRNA ligase from Mycoplasma pneumoniae (strain ATCC 29342 / M129 / Subtype 1) (Mycoplasmoides pneumoniae).